Here is a 569-residue protein sequence, read N- to C-terminus: Toxin YxiD (569 aa).

One can recognise an LXG domain in the interval 1–235 (MKTLDVHALH…NPQMKQADDS (235 aa)). A coiled-coil region spans residues 8–91 (ALHEGIQHTI…QHAISSVESN (84 aa)). The tract at residues 548–569 (HQAGIHGTGSPANELFKGGKKK) is disordered.

This sequence in the N-terminal section; belongs to the LXG family. As to quaternary structure, probably interacts with cognate immunity protein YxxD but not with non-cognate immunity proteins. The interaction inhibits the toxic activity of YxxD.

It localises to the secreted. Functionally, toxic component of one of 6 LXG toxin-immunity modules in this strain. They promote kin selection, mediate competition in biofilms, and drive spatial segregation of different strains, indicating that LXG toxins may help avoid warfare between strains in biofilms. Mediates intercellular competition during biofilm formation; disruption of the operon disadvantages the bacteria, but overexpression of the cognate immunity protein restores growth in competition with wild-type. Overexpression alone in situ causes growth arrest but not cell lysis, a large decrease in chromosomal DNA content and the production of anucleate cells. No effect is seen on rRNA. Co-overexpression with cognate immunity protein YxxD does not cause growth arrest. The toxic effect is not dependent on the epsA and tapA operons which are required for biofilm formation. This Bacillus subtilis (strain 168) protein is Toxin YxiD (yxiD).